The following is a 139-amino-acid chain: Cystatin-11 (139 aa).

An N-terminal signal peptide occupies residues 1-28 (MAAGSWKATRLLLAILVALVAFSYQVKR). Intrachain disulfides connect C94-C102 and C115-C135. N134 is a glycosylation site (N-linked (GlcNAc...) asparagine).

It belongs to the cystatin family. As to expression, expressed in epididymis, where it localizes to the proximal caput and also part of the midcaput. Not detected in other tissues tested.

It localises to the secreted. Has antibacterial activity against the Gram-negative bacteria E.coli. May play a role in sperm maturation and fertilization. The sequence is that of Cystatin-11 from Mus musculus (Mouse).